The following is a 396-amino-acid chain: MSVFIYLVKGREKSLLRRHPWIFSKGIERVEGNPVDGDTVEIYANDGRWLARGAWSGSSQIRARVWTFDKEETVDLDFFLRRLKYAQESRDPLIKRQGLTGYRLCAAESDGLPGLTIDSYADFLVCQILSAGAEFQRELITQALRTLYPECSIYERSDVAVRKKEGLKERTGVIHGETPTEPVVIEENGVKILVDIRNGHKTGFYLDQRDNRQAVSKYTSAKRVLNCFSYTGGFGIYALKGGAKEVVNVDLSQTALDMARQNAELNGLDISNTQFIRHDVFKLLREYREKGEKFDVIVLDPPKFAESKAQLLGACRGYKDINMLAFQLLAPGGVLLTYSCSGLMEQSLFQKIVADAALDAGRDAQILELLSQASDHPIGTAYPEGFYLKGLVVRAR.

The PUA domain maps to 2-79; it reads SVFIYLVKGR…KEETVDLDFF (78 aa).

This sequence belongs to the methyltransferase superfamily. RlmI family.

It is found in the cytoplasm. It catalyses the reaction cytidine(1962) in 23S rRNA + S-adenosyl-L-methionine = 5-methylcytidine(1962) in 23S rRNA + S-adenosyl-L-homocysteine + H(+). Functionally, specifically methylates the cytosine at position 1962 (m5C1962) of 23S rRNA. The sequence is that of Ribosomal RNA large subunit methyltransferase I from Aeromonas salmonicida (strain A449).